A 513-amino-acid polypeptide reads, in one-letter code: uncharacterized protein (513 aa).

A run of 5 helical transmembrane segments spans residues 262-282, 304-324, 341-361, 382-402, and 429-449; these read FAIF…FWQL, YMFL…ITYH, EPIP…FEAL, LVIG…VIIV, and MFLA…ILVL. Residues 489-513 form a disordered region; that stretch reads PGTYSRGNGQKGAKREDPKDEENNI. The span at 501 to 513 shows a compositional bias: basic and acidic residues; that stretch reads AKREDPKDEENNI.

It belongs to the GerABKA family.

It localises to the cell membrane. This is an uncharacterized protein from Bacillus subtilis (strain 168).